The following is a 283-amino-acid chain: Protein BASIC PENTACYSTEINE5 (283 aa).

The tract at residues 51-86 is alanine-zipper; it reads AVKERNEAVAATKEALASRDEALEQRDKALSERDNA. The stretch at 63-89 forms a coiled coil; that stretch reads KEALASRDEALEQRDKALSERDNAIME. The disordered stretch occupies residues 122-176; sequence EESHLPNPSPISTIPPEAANTRPTKRKKESKQGKKMGEDLNRPVASPGKKSRKDW. Over residues 151-162 the composition is skewed to basic and acidic residues; that stretch reads SKQGKKMGEDLN.

This sequence belongs to the BBR/BPC family. Homodimer. Heterodimer. Expressed in seedlings, leaves and pistils.

It is found in the nucleus. Transcriptional regulator that specifically binds to GA-rich elements (GAGA-repeats) present in regulatory sequences of genes involved in developmental processes. This is Protein BASIC PENTACYSTEINE5 (BPC5) from Arabidopsis thaliana (Mouse-ear cress).